We begin with the raw amino-acid sequence, 469 residues long: Chromosomal replication initiator protein DnaA (469 aa).

A domain I, interacts with DnaA modulators region spans residues 1–71 (MKEFWQTCVS…EALAAEWYQR (71 aa)). A domain II region spans residues 71 to 131 (RPVQVTFELP…DAANIVYERS (61 aa)). Residues 132–348 (RLNTDLTFEN…GALRKVLAYA (217 aa)) form a domain III, AAA+ region region. The ATP site is built by Gly-176, Gly-178, Lys-179, and Thr-180. The domain IV, binds dsDNA stretch occupies residues 349–469 (RFHGRDVLTV…LHVLEQTLKG (121 aa)).

The protein belongs to the DnaA family. In terms of assembly, oligomerizes as a right-handed, spiral filament on DNA at oriC.

The protein localises to the cytoplasm. In terms of biological role, plays an essential role in the initiation and regulation of chromosomal replication. ATP-DnaA binds to the origin of replication (oriC) to initiate formation of the DNA replication initiation complex once per cell cycle. Binds the DnaA box (a 9 base pair repeat at the origin) and separates the double-stranded (ds)DNA. Forms a right-handed helical filament on oriC DNA; dsDNA binds to the exterior of the filament while single-stranded (ss)DNA is stabiized in the filament's interior. The ATP-DnaA-oriC complex binds and stabilizes one strand of the AT-rich DNA unwinding element (DUE), permitting loading of DNA polymerase. After initiation quickly degrades to an ADP-DnaA complex that is not apt for DNA replication. Binds acidic phospholipids. In Bordetella parapertussis (strain 12822 / ATCC BAA-587 / NCTC 13253), this protein is Chromosomal replication initiator protein DnaA.